The primary structure comprises 498 residues: Ammonium transporter 1 member 1 (498 aa).

11 helical membrane-spanning segments follow: residues 39–59 (LLFS…LCAG), 74–94 (VLDA…FAFG), 120–140 (FFLF…GSIA), 148–168 (YLIY…HWIW), 192–212 (FAGS…GALI), 236–256 (LVVL…PGSF), 274–296 (SGVG…TTLF), 307–327 (VVDV…GCSV), 331–351 (WAAI…NALA), 360–380 (LEAA…TALF), and 411–431 (VIQI…LFYG).

This sequence belongs to the ammonia transporter channel (TC 1.A.11.2) family. In terms of tissue distribution, expressed in roots and shoots.

It localises to the membrane. In terms of biological role, ammonium transporter probably involved in ammonium uptake from the soil. The polypeptide is Ammonium transporter 1 member 1 (AMT1-1) (Oryza sativa subsp. japonica (Rice)).